The primary structure comprises 172 residues: Small ribosomal subunit protein uS5 (172 aa).

The S5 DRBM domain occupies 17 to 80 (LREKMISVNR…EQARRNMFKV (64 aa)).

It belongs to the universal ribosomal protein uS5 family. In terms of assembly, part of the 30S ribosomal subunit. Contacts proteins S4 and S8.

Its function is as follows. With S4 and S12 plays an important role in translational accuracy. In terms of biological role, located at the back of the 30S subunit body where it stabilizes the conformation of the head with respect to the body. The chain is Small ribosomal subunit protein uS5 from Paraburkholderia xenovorans (strain LB400).